The primary structure comprises 209 residues: Large ribosomal subunit protein uL3 (209 aa).

Residues 119-145 (AIKRHGQSRGPMSHGSHFHRAPGSVGM) are disordered.

Belongs to the universal ribosomal protein uL3 family. Part of the 50S ribosomal subunit. Forms a cluster with proteins L14 and L19.

In terms of biological role, one of the primary rRNA binding proteins, it binds directly near the 3'-end of the 23S rRNA, where it nucleates assembly of the 50S subunit. In Staphylococcus aureus (strain COL), this protein is Large ribosomal subunit protein uL3.